The following is a 264-amino-acid chain: uncharacterized protein (264 aa).

Residues Met1–Ala22 form the signal peptide. Residues Leu227 to Tyr247 traverse the membrane as a helical segment.

It is found in the membrane. This is an uncharacterized protein from Bacillus subtilis (strain 168).